The primary structure comprises 475 residues: Stromelysin-1 (475 aa).

A signal peptide spans 1 to 17 (MKGLPVLLWLCTAVCSS). A propeptide spans 18–97 (YPLHGSEEDA…PRCGVPDVGG (80 aa)) (activation peptide). Residues 88–95 (PRCGVPDV) carry the Cysteine switch motif. C90 contributes to the Zn(2+) binding site. N118 carries an N-linked (GlcNAc...) asparagine glycan. D122 and D156 together coordinate Ca(2+). Zn(2+) contacts are provided by H166 and D168. Residues D173, G174, G176, and V178 each coordinate Ca(2+). Residue H181 participates in Zn(2+) binding. Ca(2+) contacts are provided by G188, N190, and D192. Zn(2+) is bound at residue H194. D196, D197, and E199 together coordinate Ca(2+). Zn(2+) is bound at residue H216. E217 is a catalytic residue. 2 residues coordinate Zn(2+): H220 and H226. 4 Hemopexin repeats span residues 285–334 (LPMC…WPSL), 335–381 (PSNM…GLPE), 383–431 (VQKI…FPGI), and 432–475 (GTKV…WFNC). C288 and C475 are oxidised to a cystine. D295 contributes to the Ca(2+) binding site. Ca(2+)-binding residues include D387 and D436.

Belongs to the peptidase M10A family. The cofactor is Ca(2+). Zn(2+) is required as a cofactor.

The protein resides in the secreted. The protein localises to the extracellular space. Its subcellular location is the extracellular matrix. The enzyme catalyses Preferential cleavage where P1', P2' and P3' are hydrophobic residues.. Inhibited by a synthetic peptide corresponding to the inhibitory cysteine switch motif. Inhibited by ethylenediaminetetraacetic acid (EDTA), 1,10-pheanthroline, 2-mecaptoethanol, dithiothreitol and metalloproteinase inhibitor protein TIMP. Its function is as follows. Can degrade fibronectin, laminin, gelatins of type I, III, IV, and V; collagens III, IV, X, and IX, and cartilage proteoglycans. Activates procollagenase. Functionally, metalloproteinase with a rather broad substrate specificity that can degrade fibronectin, laminin, gelatins of type I, III, IV, and V; collagens III, IV, X, and IX, and cartilage proteoglycans. Activates different molecules including growth factors, plasminogen or other matrix metalloproteinases such as MMP9. Once released into the extracellular matrix (ECM), the inactive pro-enzyme is activated by the plasmin cascade signaling pathway. Also acts intracellularly. For example, in dopaminergic neurons, gets activated by the serine protease HTRA2 upon stress and plays a pivotal role in DA neuronal degeneration by mediating microglial activation and alpha-synuclein/SNCA cleavage. In addition, plays a role in immune response and possesses antiviral activity against various viruses. Mechanistically, translocates from the cytoplasm into the cell nucleus upon virus infection to influence NF-kappa-B activities. The polypeptide is Stromelysin-1 (Mmp3) (Rattus norvegicus (Rat)).